The primary structure comprises 450 residues: UDP-N-acetylmuramoylalanine--D-glutamate ligase (450 aa).

119–125 (GSNGKTT) lines the ATP pocket.

This sequence belongs to the MurCDEF family.

It is found in the cytoplasm. The catalysed reaction is UDP-N-acetyl-alpha-D-muramoyl-L-alanine + D-glutamate + ATP = UDP-N-acetyl-alpha-D-muramoyl-L-alanyl-D-glutamate + ADP + phosphate + H(+). It participates in cell wall biogenesis; peptidoglycan biosynthesis. Functionally, cell wall formation. Catalyzes the addition of glutamate to the nucleotide precursor UDP-N-acetylmuramoyl-L-alanine (UMA). This chain is UDP-N-acetylmuramoylalanine--D-glutamate ligase, found in Streptococcus pneumoniae (strain P1031).